We begin with the raw amino-acid sequence, 48 residues long: Large ribosomal subunit protein bL33A (48 aa).

It belongs to the bacterial ribosomal protein bL33 family.

The chain is Large ribosomal subunit protein bL33A from Streptococcus agalactiae serotype V (strain ATCC BAA-611 / 2603 V/R).